The chain runs to 266 residues: Undecaprenyl-diphosphatase (266 aa).

The next 7 membrane-spanning stretches (helical) occupy residues 39–59, 86–106, 112–132, 147–167, 189–209, 216–236, and 246–266; these read PGAS…AYYF, SIFI…IFIP, VLRS…FMYL, NFSN…PGVS, FSFL…FVSS, LGFF…LLAI, and NGLK…LLNL.

The protein belongs to the UppP family.

The protein resides in the cell inner membrane. The enzyme catalyses di-trans,octa-cis-undecaprenyl diphosphate + H2O = di-trans,octa-cis-undecaprenyl phosphate + phosphate + H(+). Catalyzes the dephosphorylation of undecaprenyl diphosphate (UPP). Confers resistance to bacitracin. In Prochlorococcus marinus (strain MIT 9301), this protein is Undecaprenyl-diphosphatase.